The chain runs to 2904 residues: Highly reducing polyketide synthase bet1 (2904 aa).

A Ketosynthase family 3 (KS3) domain is found at 8-441 (NEPIAIVGSG…GTNAHAIVES (434 aa)). Residues Cys-181, His-320, and His-361 each act as for beta-ketoacyl synthase activity in the active site. The segment at 553–875 (VFTGQGAQYA…PYHGTLLRGG (323 aa)) is acyl transferase (AT) domain. Residues 948 to 1081 (HQLLGDVSPD…GELKVVLVDE (134 aa)) are N-terminal hotdog fold. Residues 948–1257 (HQLLGDVSPD…FKPVGSDASN (310 aa)) enclose the PKS/mFAS DH domain. Positions 971-1255 (PREMTWLEGH…VKFKPVGSDA (285 aa)) are dehydratase (DH) domain. His-980 acts as the Proton acceptor; for dehydratase activity in catalysis. Residues 1098 to 1257 (MIPVQPSRLY…FKPVGSDASN (160 aa)) form a C-terminal hotdog fold region. Residue Asp-1159 is the Proton donor; for dehydratase activity of the active site. Positions 1411–1596 (KQSTLWVASI…GFSGIDTMSP (186 aa)) are methyltransferase (cMeT) domain. The tract at residues 2125-2298 (TYWLVGLSGA…RSSVVNVGAI (174 aa)) is ketoreductase (KR)domain. Residues 2407 to 2486 (EVANVIKQAY…SLVELAAESI (80 aa)) form the Carrier domain. At Ser-2445 the chain carries O-(pantetheine 4'-phosphoryl)serine. A disordered region spans residues 2492–2543 (PGVPQANANPNGPSSPDSDATESSNQNSDVDVTSTRATSPSTPAATSPDSNV). Over residues 2497 to 2523 (ANANPNGPSSPDSDATESSNQNSDVDV) the composition is skewed to polar residues. Over residues 2524–2541 (TSTRATSPSTPAATSPDS) the composition is skewed to low complexity. Positions 2585–2817 (LTGCSGLLGH…DLVSVETCCE (233 aa)) are reductase (R) domain.

It depends on pantetheine 4'-phosphate as a cofactor.

The enzyme catalyses 7 malonyl-CoA + acetyl-CoA + 10 AH2 + 5 S-adenosyl-L-methionine + 2 H(+) = dehydroprobetaenone I + 10 A + 5 S-adenosyl-L-homocysteine + 7 CO2 + 8 CoA + 6 H2O. The protein operates within mycotoxin biosynthesis. Highly reducing polyketide synthase; part of the gene cluster that mediates the biosynthesis of betaenones, phytotoxic polyketides involved in leaf spot disease in sugar beets. The first step of the pathway is the synthesis of dehydroprobetaenone I by the polyketide synthase bet1 and the enoyl reductase bet3 via condensation of one acetyl-CoA starter unit with 7 malonyl-CoA units and 5 methylations. The C-terminal reductase (R) domain of bet1 catalyzes the reductive release of the polyketide chain. Because bet1 lacks a designated enoylreductase (ER) domain, the required activity is provided the enoyl reductase bet3. The short-chain dehydrogenase/reductase bet4 then catalyzes reduction of dehydroprobetaenone I to probetaenone I. The cytochrome P450 monooxygenase bet2 catalyzes successive epoxidation, oxidation (resulting from epoxide opening) and hydroxylation to install a tertiary alcohol in the decaline ring to yield betaenone C from dehydroprobetaenone I and betaenone B from probetaenone I. The FAD-linked oxidoreductase (orf1) is probably responsible for the conversion of betaenone C to betaenone A via an intramolecular aldol reaction between C-1 and C-17 to form the bridged tricyclic system in betaenone A. This Neocamarosporium betae (Beet black rot fungus) protein is Highly reducing polyketide synthase bet1.